Here is a 242-residue protein sequence, read N- to C-terminus: Probable septum site-determining protein MinC (242 aa).

Basic and acidic residues predominate over residues 120–135 (APKKVEEKPAEPEHKP). The segment at 120 to 144 (APKKVEEKPAEPEHKPSRIVTSPVR) is disordered.

The protein belongs to the MinC family. As to quaternary structure, interacts with MinD and FtsZ.

Its function is as follows. Cell division inhibitor that blocks the formation of polar Z ring septums. Rapidly oscillates between the poles of the cell to destabilize FtsZ filaments that have formed before they mature into polar Z rings. Prevents FtsZ polymerization. The protein is Probable septum site-determining protein MinC of Ectopseudomonas mendocina (strain ymp) (Pseudomonas mendocina).